We begin with the raw amino-acid sequence, 309 residues long: Serine/threonine-protein phosphatase 2A catalytic subunit beta isoform (309 aa).

Mn(2+) is bound by residues aspartate 57, histidine 59, aspartate 85, and asparagine 117. Histidine 118 acts as the Proton donor in catalysis. Mn(2+) is bound by residues histidine 167 and histidine 241. Tyrosine 307 carries the phosphotyrosine modification. The residue at position 309 (leucine 309) is a Leucine methyl ester.

It belongs to the PPP phosphatase family. PP-1 subfamily. As to quaternary structure, PP2A consists of a common heterodimeric core enzyme (composed of a 36 kDa catalytic subunit (subunit C) and a 65 kDa constant regulatory subunit (PR65) (subunit A)) that associates with a variety of regulatory subunits. Proteins that associate with the core dimer include three families of regulatory subunits B (the R2/B/PR55/B55, R3/B''/PR72/PR130/PR59 and R5/B'/B56 families), the 48 kDa variable regulatory subunit, viral proteins, and cell signaling molecules. Binds PPME1. May indirectly interact with SGO1, most probably through regulatory B56 subunits. Found in a complex with at least ARL2, PPP2CB, PPP2R1A, PPP2R2A, PPP2R5E and TBCD. Interacts with TBCD. Interacts with CTTNBP2NL. Interacts with PTPA. Part of the core of STRIPAK complexes composed of PP2A catalytic and scaffolding subunits, the striatins (PP2A regulatory subunits), the striatin-associated proteins MOB4, STRIP1 and STRIP2, PDCD10 and members of the STE20 kinases, such as STK24 and STK26. It depends on Mn(2+) as a cofactor. In terms of processing, reversibly methyl esterified on Leu-309 by leucine carboxyl methyltransferase 1 (LCMT1) and protein phosphatase methylesterase 1 (PPME1). Carboxyl methylation influences the affinity of the catalytic subunit for the different regulatory subunits, thereby modulating the PP2A holoenzyme's substrate specificity, enzyme activity and cellular localization. Phosphorylation of either threonine (by autophosphorylation-activated protein kinase) or tyrosine results in inactivation of the phosphatase. Auto-dephosphorylation has been suggested as a mechanism for reactivation. Post-translationally, may be monoubiquitinated by NOSIP.

The protein localises to the cytoplasm. It is found in the nucleus. The protein resides in the chromosome. It localises to the centromere. Its subcellular location is the cytoskeleton. The protein localises to the spindle pole. The enzyme catalyses O-phospho-L-seryl-[protein] + H2O = L-seryl-[protein] + phosphate. The catalysed reaction is O-phospho-L-threonyl-[protein] + H2O = L-threonyl-[protein] + phosphate. Catalytic subunit of protein phosphatase 2A (PP2A), a serine/threonine phosphatase involved in the regulation of a wide variety of enzymes, signal transduction pathways, and cellular events. PP2A can modulate the activity of phosphorylase B kinase, casein kinase 2, mitogen-stimulated S6 kinase, and MAP-2 kinase. Part of the striatin-interacting phosphatase and kinase (STRIPAK) complexes. STRIPAK complexes have critical roles in protein (de)phosphorylation and are regulators of multiple signaling pathways including Hippo, MAPK, nuclear receptor and cytoskeleton remodeling. Different types of STRIPAK complexes are involved in a variety of biological processes such as cell growth, differentiation, apoptosis, metabolism and immune regulation. The sequence is that of Serine/threonine-protein phosphatase 2A catalytic subunit beta isoform (PPP2CB) from Bos taurus (Bovine).